The sequence spans 332 residues: MNPWRRYSWEIALAALLIFEILAFGLINPRLLDINVLLFSTSDFICIGIVALPLTMVIVSGGMDISFGSTIGLCAITLGVLFQLGMPLPLAIIITLLLGAICGLINAGLIIYTGVNPLVITLGTMYLFGGSALLLSGMAGATGYEGIGGFPTAFTDFANISFLGIPMPLIFFLVCCLFFWLLMHRTHMGRNVFLIGQSARVAQYSAIPVNRTLYTVYAMTGCASAIAAVLLVSYFGSARSDLGASFLMPAITAVVLGGANIYGGSGSIMGSALAALLVGFLQQGLQMAGVPNQISSALSGALLIVVVVGRSVSLHRHQILEWYSRRRNAHQA.

The next 10 helical transmembrane spans lie at 7 to 27 (YSWE…FGLI), 45 to 65 (ICIG…GMDI), 70 to 90 (TIGL…PLPL), 91 to 111 (AIII…GLII), 118 to 138 (LVIT…LSGM), 162 to 182 (FLGI…FWLL), 216 to 236 (VYAM…SYFG), 240 to 260 (SDLG…GGAN), 261 to 281 (IYGG…VGFL), and 288 to 308 (AGVP…VVVV).

It belongs to the binding-protein-dependent transport system permease family. AraH/RbsC subfamily. In terms of assembly, the complex is composed of two ATP-binding proteins (LsrA), two transmembrane proteins (LsrC and LsrD) and a solute-binding protein (LsrB).

It is found in the cell inner membrane. Part of the ABC transporter complex LsrABCD involved in autoinducer 2 (AI-2) import. Probably responsible for the translocation of the substrate across the membrane. In Salmonella paratyphi B (strain ATCC BAA-1250 / SPB7), this protein is Autoinducer 2 import system permease protein LsrD (lsrD).